Here is a 339-residue protein sequence, read N- to C-terminus: Annexin A2 (339 aa).

N-acetylserine is present on S2. The segment at 2–24 is S100A10-binding site; sequence STVHEILCKLSLEGDHSTPPSAY. A Phosphotyrosine; by SRC modification is found at Y24. S26 is subject to Phosphoserine; by PKC. Annexin repeat units lie at residues 33 to 104 and 105 to 176; these read FDAE…GLLK and TPAQ…ALAK. K49 is modified (N6-acetyllysine; alternate). K49 is covalently cross-linked (Glycyl lysine isopeptide (Lys-Gly) (interchain with G-Cter in SUMO1); alternate). K49 participates in a covalent cross-link: Glycyl lysine isopeptide (Lys-Gly) (interchain with G-Cter in SUMO2); alternate. K152 is modified (N6-acetyllysine). Residue S184 is modified to Phosphoserine. Annexin repeat units follow at residues 189–261 and 265–336; these read ELID…NLVQ and NKPL…YLCG. Y199 bears the Phosphotyrosine mark. K227 is subject to N6-acetyllysine.

Belongs to the annexin family. In terms of assembly, heterotetramer containing 2 light chains of S100A10/p11 and 2 heavy chains of ANXA2/p36. Interacts with ATP1B1. Interacts with DYSF. Interacts with COCH. Interacts (via repeat Annexin 1) with PCSK9 (via the C-terminal domain); the interaction inhibits the degradation of LDLR. Interacts with CEACAM1 (via the cytoplasmic domain); this interaction is regulated by phosphorylation of CEACAM1. Interacts with APPL2 and APPL1; targets APPL2 to endosomes and acting in parallel to RAB5A. Interacts with S100A4. May interact with UBAP2. Interacts with PLEKHG4B; this interaction is required for PLEKHG4B localization to cell-cell adhesions. In terms of processing, ISGylated.

It is found in the secreted. It localises to the extracellular space. The protein localises to the extracellular matrix. The protein resides in the basement membrane. In terms of biological role, calcium-regulated membrane-binding protein whose affinity for calcium is greatly enhanced by anionic phospholipids. It binds two calcium ions with high affinity. May be involved in heat-stress response. Inhibits PCSK9-enhanced LDLR degradation, probably reduces PCSK9 protein levels via a translational mechanism but also competes with LDLR for binding with PCSK9. Binds to endosomes damaged by phagocytosis of particulate wear debris and participates in endosomal membrane stabilization, thereby limiting NLRP3 inflammasome activation. Required for endothelial cell surface plasmin generation and may support fibrinolytic surveillance and neoangiogenesis. This chain is Annexin A2 (ANXA2), found in Canis lupus familiaris (Dog).